The chain runs to 1432 residues: Gag-Pol polyprotein (1432 aa).

The N-myristoyl glycine; by host moiety is linked to residue Gly-2. Positions 7–31 (ILSGGKLDDWEKIRLRPGGKKKYRI) are interaction with Gp41. The interaction with host CALM1 stretch occupies residues 8–43 (LSGGKLDDWEKIRLRPGGKKKYRIKHLVWASRELDR). Residues 12–19 (KLDDWEKI) form an interaction with host AP3D1 region. Positions 14 to 33 (DDWEKIRLRPGGKKKYRIKH) are interaction with membrane phosphatidylinositol 4,5-bisphosphate and RNA. A Nuclear export signal motif is present at residues 16–22 (WEKIRLR). Positions 26–32 (KKKYRIK) match the Nuclear localization signal motif. The interaction with membrane phosphatidylinositol 4,5-bisphosphate stretch occupies residues 73 to 77 (QEIKS). At Tyr-132 the chain carries Phosphotyrosine; by host. The interaction with human PPIA/CYPA and NUP153 stretch occupies residues 189–227 (NTIGGHQAAMQMLKDTINEEAAEWDRVHPVHAGPIAPGQ). A dimerization/Multimerization of capsid protein p24 region spans residues 277–363 (YSPVSILDIR…GGPGHKARVL (87 aa)). 2 consecutive CCHC-type zinc fingers follow at residues 389 to 406 (VKCFNCGKQGHIAKNCRA) and 410 to 427 (KGCWKCGKEGHQMKDCTE). The segment at 443–483 (EARELSPEQTRANSPTSREPRARRGDPLPETGAEGQGTVSS) is disordered. Residues 449-459 (PEQTRANSPTS) show a composition bias toward polar residues. Residues 460 to 469 (REPRARRGDP) are compositionally biased toward basic and acidic residues. Residues 486-490 (PQITL) are dimerization of protease. In terms of domain architecture, Peptidase A2 spans 505-574 (REALLDTGAD…TPVNIIGRNM (70 aa)). The For protease activity; shared with dimeric partner role is filled by Asp-510. Dimerization of protease regions lie at residues 534–540 (GIGGFIK) and 573–585 (NMLTQLGCTLNFP). The region spanning 628–818 (EGKISRVGPE…PPFLWMGYEL (191 aa)) is the Reverse transcriptase domain. Residues Asp-694, Asp-769, and Asp-770 each contribute to the Mg(2+) site. Positions 811–819 (FLWMGYELH) are RT 'primer grip'. The short motif at 982 to 998 (WETWWTDYWQATWIPEW) is the Tryptophan repeat motif element. The RNase H type-1 domain occupies 1018–1141 (IMGAETFYVD…VDKLVSSGIR (124 aa)). Mg(2+) contacts are provided by Asp-1027, Glu-1062, Asp-1082, and Asp-1133. The segment at 1147 to 1188 (DGIDKAQEDHEKYHSNWRAMASDFNLPPVVAKEIVASCDKCQ) adopts an Integrase-type zinc-finger fold. 4 residues coordinate Zn(2+): His-1156, His-1160, Cys-1184, and Cys-1187. Positions 1198–1348 (VDCSPGIWQL…SAGERIIDII (151 aa)) constitute an Integrase catalytic domain. Residues Asp-1208, Asp-1260, and Glu-1296 each coordinate Mg(2+). Residues 1367–1414 (FRVYYRDSRDPIWKGPAKLPWKGEGAVVIQDNSEIKVVPRRKAKIIRD) constitute a DNA-binding region (integrase-type).

In terms of assembly, homotrimer; further assembles as hexamers of trimers. Interacts with gp41 (via C-terminus). Interacts with host CALM1; this interaction induces a conformational change in the Matrix protein, triggering exposure of the myristate group. Interacts with host AP3D1; this interaction allows the polyprotein trafficking to multivesicular bodies during virus assembly. Part of the pre-integration complex (PIC) which is composed of viral genome, matrix protein, Vpr and integrase. Homodimer; the homodimer further multimerizes as homohexamers or homopentamers. Interacts with human PPIA/CYPA; This interaction stabilizes the capsid. Interacts with human NUP153. Interacts with host PDZD8; this interaction stabilizes the capsid. Interacts with monkey TRIM5; this interaction destabilizes the capsid. As to quaternary structure, homodimer, whose active site consists of two apposed aspartic acid residues. In terms of assembly, heterodimer of p66 RT and p51 RT (RT p66/p51). Heterodimerization of RT is essential for DNA polymerase activity. The overall folding of the subdomains is similar in p66 RT and p51 RT but the spatial arrangements of the subdomains are dramatically different. Homotetramer; may further associate as a homohexadecamer. Part of the pre-integration complex (PIC) which is composed of viral genome, matrix protein, Vpr and integrase. Interacts with human SMARCB1/INI1 and human PSIP1/LEDGF isoform 1. Interacts with human KPNA3; this interaction might play a role in nuclear import of the pre-integration complex. Interacts with human NUP153; this interaction might play a role in nuclear import of the pre-integration complex. Mg(2+) serves as cofactor. In terms of processing, specific enzymatic cleavages by the viral protease yield mature proteins. The protease is released by autocatalytic cleavage. The polyprotein is cleaved during and after budding, this process is termed maturation. Proteolytic cleavage of p66 RT removes the RNase H domain to yield the p51 RT subunit. Nucleocapsid protein p7 might be further cleaved after virus entry. Post-translationally, tyrosine phosphorylated presumably in the virion by a host kinase. Phosphorylation is apparently not a major regulator of membrane association. Phosphorylated possibly by host MAPK1; this phosphorylation is necessary for Pin1-mediated virion uncoating. In terms of processing, methylated by host PRMT6, impairing its function by reducing RNA annealing and the initiation of reverse transcription.

It localises to the host cell membrane. Its subcellular location is the host endosome. It is found in the host multivesicular body. The protein localises to the virion membrane. The protein resides in the host nucleus. It localises to the host cytoplasm. Its subcellular location is the virion. The enzyme catalyses Specific for a P1 residue that is hydrophobic, and P1' variable, but often Pro.. It catalyses the reaction Endohydrolysis of RNA in RNA/DNA hybrids. Three different cleavage modes: 1. sequence-specific internal cleavage of RNA. Human immunodeficiency virus type 1 and Moloney murine leukemia virus enzymes prefer to cleave the RNA strand one nucleotide away from the RNA-DNA junction. 2. RNA 5'-end directed cleavage 13-19 nucleotides from the RNA end. 3. DNA 3'-end directed cleavage 15-20 nucleotides away from the primer terminus.. It carries out the reaction 3'-end directed exonucleolytic cleavage of viral RNA-DNA hybrid.. The catalysed reaction is DNA(n) + a 2'-deoxyribonucleoside 5'-triphosphate = DNA(n+1) + diphosphate. Its activity is regulated as follows. Protease: The viral protease is inhibited by many synthetic protease inhibitors (PIs), such as amprenavir, atazanavir, indinavir, loprinavir, nelfinavir, ritonavir and saquinavir. Use of protease inhibitors in tritherapy regimens permit more ambitious therapeutic strategies. Reverse transcriptase/ribonuclease H: RT can be inhibited either by nucleoside RT inhibitors (NRTIs) or by non nucleoside RT inhibitors (NNRTIs). NRTIs act as chain terminators, whereas NNRTIs inhibit DNA polymerization by binding a small hydrophobic pocket near the RT active site and inducing an allosteric change in this region. Classical NRTIs are abacavir, adefovir (PMEA), didanosine (ddI), lamivudine (3TC), stavudine (d4T), tenofovir (PMPA), zalcitabine (ddC), and zidovudine (AZT). Classical NNRTIs are atevirdine (BHAP U-87201E), delavirdine, efavirenz (DMP-266), emivirine (I-EBU), and nevirapine (BI-RG-587). The tritherapies used as a basic effective treatment of AIDS associate two NRTIs and one NNRTI. Functionally, mediates, with Gag polyprotein, the essential events in virion assembly, including binding the plasma membrane, making the protein-protein interactions necessary to create spherical particles, recruiting the viral Env proteins, and packaging the genomic RNA via direct interactions with the RNA packaging sequence (Psi). Gag-Pol polyprotein may regulate its own translation, by the binding genomic RNA in the 5'-UTR. At low concentration, the polyprotein would promote translation, whereas at high concentration, the polyprotein would encapsidate genomic RNA and then shut off translation. Targets the polyprotein to the plasma membrane via a multipartite membrane-binding signal, that includes its myristoylated N-terminus. Matrix protein is part of the pre-integration complex. Implicated in the release from host cell mediated by Vpu. Binds to RNA. Its function is as follows. Forms the conical core that encapsulates the genomic RNA-nucleocapsid complex in the virion. Most core are conical, with only 7% tubular. The core is constituted by capsid protein hexamer subunits. The core is disassembled soon after virion entry. Host restriction factors such as TRIM5-alpha or TRIMCyp bind retroviral capsids and cause premature capsid disassembly, leading to blocks in reverse transcription. Capsid restriction by TRIM5 is one of the factors which restricts HIV-1 to the human species. Host PIN1 apparently facilitates the virion uncoating. On the other hand, interactions with PDZD8 or CYPA stabilize the capsid. In terms of biological role, encapsulates and protects viral dimeric unspliced genomic RNA (gRNA). Binds these RNAs through its zinc fingers. Acts as a nucleic acid chaperone which is involved in rearangement of nucleic acid secondary structure during gRNA retrotranscription. Also facilitates template switch leading to recombination. As part of the polyprotein, participates in gRNA dimerization, packaging, tRNA incorporation and virion assembly. Functionally, aspartyl protease that mediates proteolytic cleavages of Gag and Gag-Pol polyproteins during or shortly after the release of the virion from the plasma membrane. Cleavages take place as an ordered, step-wise cascade to yield mature proteins. This process is called maturation. Displays maximal activity during the budding process just prior to particle release from the cell. Also cleaves Nef and Vif, probably concomitantly with viral structural proteins on maturation of virus particles. Hydrolyzes host EIF4GI and PABP1 in order to shut off the capped cellular mRNA translation. The resulting inhibition of cellular protein synthesis serves to ensure maximal viral gene expression and to evade host immune response. Also mediates cleavage of host YTHDF3. Mediates cleavage of host CARD8, thereby activating the CARD8 inflammasome, leading to the clearance of latent HIV-1 in patient CD4(+) T-cells after viral reactivation; in contrast, HIV-1 can evade CARD8-sensing when its protease remains inactive in infected cells prior to viral budding. Multifunctional enzyme that converts the viral RNA genome into dsDNA in the cytoplasm, shortly after virus entry into the cell. This enzyme displays a DNA polymerase activity that can copy either DNA or RNA templates, and a ribonuclease H (RNase H) activity that cleaves the RNA strand of RNA-DNA heteroduplexes in a partially processive 3' to 5' endonucleasic mode. Conversion of viral genomic RNA into dsDNA requires many steps. A tRNA(3)-Lys binds to the primer-binding site (PBS) situated at the 5'-end of the viral RNA. RT uses the 3' end of the tRNA primer to perform a short round of RNA-dependent minus-strand DNA synthesis. The reading proceeds through the U5 region and ends after the repeated (R) region which is present at both ends of viral RNA. The portion of the RNA-DNA heteroduplex is digested by the RNase H, resulting in a ssDNA product attached to the tRNA primer. This ssDNA/tRNA hybridizes with the identical R region situated at the 3' end of viral RNA. This template exchange, known as minus-strand DNA strong stop transfer, can be either intra- or intermolecular. RT uses the 3' end of this newly synthesized short ssDNA to perform the RNA-dependent minus-strand DNA synthesis of the whole template. RNase H digests the RNA template except for two polypurine tracts (PPTs) situated at the 5'-end and near the center of the genome. It is not clear if both polymerase and RNase H activities are simultaneous. RNase H probably can proceed both in a polymerase-dependent (RNA cut into small fragments by the same RT performing DNA synthesis) and a polymerase-independent mode (cleavage of remaining RNA fragments by free RTs). Secondly, RT performs DNA-directed plus-strand DNA synthesis using the PPTs that have not been removed by RNase H as primers. PPTs and tRNA primers are then removed by RNase H. The 3' and 5' ssDNA PBS regions hybridize to form a circular dsDNA intermediate. Strand displacement synthesis by RT to the PBS and PPT ends produces a blunt ended, linear dsDNA copy of the viral genome that includes long terminal repeats (LTRs) at both ends. Its function is as follows. Catalyzes viral DNA integration into the host chromosome, by performing a series of DNA cutting and joining reactions. This enzyme activity takes place after virion entry into a cell and reverse transcription of the RNA genome in dsDNA. The first step in the integration process is 3' processing. This step requires a complex comprising the viral genome, matrix protein, Vpr and integrase. This complex is called the pre-integration complex (PIC). The integrase protein removes 2 nucleotides from each 3' end of the viral DNA, leaving recessed CA OH's at the 3' ends. In the second step, the PIC enters cell nucleus. This process is mediated through integrase and Vpr proteins, and allows the virus to infect a non dividing cell. This ability to enter the nucleus is specific of lentiviruses, other retroviruses cannot and rely on cell division to access cell chromosomes. In the third step, termed strand transfer, the integrase protein joins the previously processed 3' ends to the 5' ends of strands of target cellular DNA at the site of integration. The 5'-ends are produced by integrase-catalyzed staggered cuts, 5 bp apart. A Y-shaped, gapped, recombination intermediate results, with the 5'-ends of the viral DNA strands and the 3' ends of target DNA strands remaining unjoined, flanking a gap of 5 bp. The last step is viral DNA integration into host chromosome. This involves host DNA repair synthesis in which the 5 bp gaps between the unjoined strands are filled in and then ligated. Since this process occurs at both cuts flanking the HIV genome, a 5 bp duplication of host DNA is produced at the ends of HIV-1 integration. Alternatively, Integrase may catalyze the excision of viral DNA just after strand transfer, this is termed disintegration. The polypeptide is Gag-Pol polyprotein (gag-pol) (Human immunodeficiency virus type 1 group M subtype J (isolate SE9280) (HIV-1)).